Consider the following 964-residue polypeptide: Glycine dehydrogenase (decarboxylating) (964 aa).

Lys-710 bears the N6-(pyridoxal phosphate)lysine mark.

It belongs to the GcvP family. In terms of assembly, the glycine cleavage system is composed of four proteins: P, T, L and H. Pyridoxal 5'-phosphate serves as cofactor.

It carries out the reaction N(6)-[(R)-lipoyl]-L-lysyl-[glycine-cleavage complex H protein] + glycine + H(+) = N(6)-[(R)-S(8)-aminomethyldihydrolipoyl]-L-lysyl-[glycine-cleavage complex H protein] + CO2. Its function is as follows. The glycine cleavage system catalyzes the degradation of glycine. The P protein binds the alpha-amino group of glycine through its pyridoxal phosphate cofactor; CO(2) is released and the remaining methylamine moiety is then transferred to the lipoamide cofactor of the H protein. This is Glycine dehydrogenase (decarboxylating) from Saccharophagus degradans (strain 2-40 / ATCC 43961 / DSM 17024).